The primary structure comprises 236 residues: uncharacterized protein (236 aa).

Residues 1-29 (MKGGDKMKKLILLMLLLPISLIGCTDEES) form the signal peptide.

This is an uncharacterized protein from Archaeoglobus fulgidus (strain ATCC 49558 / DSM 4304 / JCM 9628 / NBRC 100126 / VC-16).